Here is a 97-residue protein sequence, read N- to C-terminus: ESAT-6-like protein EsxG (97 aa).

It belongs to the WXG100 family. CFP-10 subfamily. Forms a tight 1:1 complex with EsxH.

The protein localises to the secreted. The protein is ESAT-6-like protein EsxG of Mycolicibacterium smegmatis (strain ATCC 700084 / mc(2)155) (Mycobacterium smegmatis).